The chain runs to 227 residues: N-acetyltransferase 8B (227 aa).

The Cytoplasmic segment spans residues methionine 1–threonine 42. A helical; Signal-anchor for type II membrane protein membrane pass occupies residues leucine 43–alanine 63. An N-acetyltransferase domain is found at isoleucine 61–histidine 214. The Lumenal segment spans residues leucine 64–leucine 227. Lysine 99 is modified (N6-acetyllysine).

Belongs to the NAT8 family. In terms of processing, acetylation on Lys-99 modulates enzymatic activity.

It is found in the endoplasmic reticulum-Golgi intermediate compartment membrane. It localises to the endoplasmic reticulum membrane. It catalyses the reaction L-lysyl-[protein] + acetyl-CoA = N(6)-acetyl-L-lysyl-[protein] + CoA + H(+). Its activity is regulated as follows. Allosterically regulated by acetylation at residue Lys-99. Its function is as follows. Endoplasmic reticulum (ER)-membrane-bound lysine N-acetyltransferase catalyzing the N6-acetylation of lysine residues in the lumen of the ER in various proteins, including PROM1 and BACE1, using acetyl-CoA as acetyl donor. Thereby, may regulate apoptosis through the acetylation and the regulation of the expression of PROM1. Acetylates and stabilizes BACE1 immature protein, leading to increased steady-state levels in neurons. By acting on BACE1 expression, may regulate amyloid beta-peptide formation. N(6)-lysine acetylation in ER maintains protein homeostasis and regulates reticulophagy. The polypeptide is N-acetyltransferase 8B (Homo sapiens (Human)).